The chain runs to 1020 residues: Mediator of RNA polymerase II transcription subunit 16 (1020 aa).

This sequence belongs to the Mediator complex subunit 16 family. As to quaternary structure, component of the Mediator complex.

It localises to the nucleus. In terms of biological role, component of the Mediator complex, a coactivator involved in the regulated transcription of nearly all RNA polymerase II-dependent genes. Mediator functions as a bridge to convey information from gene-specific regulatory proteins to the basal RNA polymerase II transcription machinery. Mediator is recruited to promoters by direct interactions with regulatory proteins and serves as a scaffold for the assembly of a functional preinitiation complex with RNA polymerase II and the general transcription factors. The polypeptide is Mediator of RNA polymerase II transcription subunit 16 (SIN4) (Scheffersomyces stipitis (strain ATCC 58785 / CBS 6054 / NBRC 10063 / NRRL Y-11545) (Yeast)).